A 334-amino-acid polypeptide reads, in one-letter code: MTKVVVCALYKFVSLPHFESIRAPLLAMMEQAEIKGTLLLASEGINGTVAGTQEAIEALLVWLNSQNGLDNIVHKLSFDDEMPFYRTKVKLKNEIVTMGVEGIDPLKVVGTYVKPQDWNALISDPDVILVDTRNDYEVQIGTFKNAVNPVTETFREFPEYVKQNLDPAKHKKVAMFCTGGIRCEKSTAYLKEQGFDEVYHLEGGILKYLEEVKAEESLWEGECFVFDNRVAVNHDLKKGQYDQCNACRMPITEAEKQSPAYVQGVSCPHCIDKISDEQRKRFVERERQVNLAKARNEAHIGSDVNQVIEARREKKEAQRRLAAEKNNAKKSQVL.

The 95-residue stretch at 123 to 217 folds into the Rhodanese domain; sequence SDPDVILVDT…YLEEVKAEES (95 aa). Cys177 serves as the catalytic Cysteine persulfide intermediate.

This sequence belongs to the TrhO family.

The enzyme catalyses uridine(34) in tRNA + AH2 + O2 = 5-hydroxyuridine(34) in tRNA + A + H2O. Its function is as follows. Catalyzes oxygen-dependent 5-hydroxyuridine (ho5U) modification at position 34 in tRNAs. The protein is tRNA uridine(34) hydroxylase of Shewanella baltica (strain OS195).